The following is a 152-amino-acid chain: Superoxide dismutase [Cu-Zn] (152 aa).

Residues His45, His47, and His62 each coordinate Cu cation. A disulfide bond links Cys56 and Cys145. His62, His70, His79, and Asp82 together coordinate Zn(2+). His119 is a binding site for Cu cation.

The protein belongs to the Cu-Zn superoxide dismutase family. As to quaternary structure, homodimer. The cofactor is Cu cation. It depends on Zn(2+) as a cofactor.

Its subcellular location is the cytoplasm. It catalyses the reaction 2 superoxide + 2 H(+) = H2O2 + O2. Destroys radicals which are normally produced within the cells and which are toxic to biological systems. This is Superoxide dismutase [Cu-Zn] (SODCC) from Carica papaya (Papaya).